The following is a 62-amino-acid chain: Overexpressed in colon carcinoma 1 protein homolog (62 aa).

Gly residues predominate over residues 1 to 16; that stretch reads MGCGNSTAGGAGGRGA. Residues 1–62 are disordered; it reads MGCGNSTAGG…SGQTKAAPKD (62 aa).

This sequence belongs to the OCC1 family.

The polypeptide is Overexpressed in colon carcinoma 1 protein homolog (Gallus gallus (Chicken)).